The following is a 214-amino-acid chain: Phosphatidylserine decarboxylase proenzyme (214 aa).

S182 serves as the catalytic Schiff-base intermediate with substrate; via pyruvic acid. S182 carries the post-translational modification Pyruvic acid (Ser); by autocatalysis.

Belongs to the phosphatidylserine decarboxylase family. PSD-A subfamily. In terms of assembly, heterodimer of a large membrane-associated beta subunit and a small pyruvoyl-containing alpha subunit. Pyruvate serves as cofactor. Is synthesized initially as an inactive proenzyme. Formation of the active enzyme involves a self-maturation process in which the active site pyruvoyl group is generated from an internal serine residue via an autocatalytic post-translational modification. Two non-identical subunits are generated from the proenzyme in this reaction, and the pyruvate is formed at the N-terminus of the alpha chain, which is derived from the carboxyl end of the proenzyme. The post-translation cleavage follows an unusual pathway, termed non-hydrolytic serinolysis, in which the side chain hydroxyl group of the serine supplies its oxygen atom to form the C-terminus of the beta chain, while the remainder of the serine residue undergoes an oxidative deamination to produce ammonia and the pyruvoyl prosthetic group on the alpha chain.

Its subcellular location is the cell membrane. The enzyme catalyses a 1,2-diacyl-sn-glycero-3-phospho-L-serine + H(+) = a 1,2-diacyl-sn-glycero-3-phosphoethanolamine + CO2. Its pathway is phospholipid metabolism; phosphatidylethanolamine biosynthesis; phosphatidylethanolamine from CDP-diacylglycerol: step 2/2. Catalyzes the formation of phosphatidylethanolamine (PtdEtn) from phosphatidylserine (PtdSer). The polypeptide is Phosphatidylserine decarboxylase proenzyme (Burkholderia cenocepacia (strain HI2424)).